The chain runs to 545 residues: MASHTKDALLSRRYIEGQIAAGKHIIIFDDRVLKVDSWIKFHPGGDKSIKHMVGQDATDEINALHSVEARQRMLAFQIGRIQGPWVNFLPPIQGGKFRHYDENADSEEDDTSGQSQPPSPIFDAVDAAPGVRRQYASSETSVSTPASESSEPKPFFLDARTREEIVLDTAKYPSLDAKTQQDIKRRYRELNKRIEAEGLYDCNYFSYFIEACRYTLFAGLSYFFLRLGWYSVSAVFLGCFWHQLVFSAHDAGHIAITHNYQVDSIIGILIADFLGGLSLGWWKRSHNVHHIVTNEPEHDPDIEHMPFFAISHRFFMNLRSTYYDRVMYFDAFSNFMLKYQHYLYYPILLFGRFNLYRLSWEYLILGQGPRKGPAWWHRWFEIAGQIFFWIWFGYGVLYCSIPTWGSRLSFLFISHMVTAPVHVQITLSHFAMSTADLGVQESFPQKMLRTTMDVDCPTWLDFFHGGLQFQAIHHLYPRIPRHNLRRTQKLVLEFCRDTGIPYALFTFTDGNKEVIGRLGDIAKQVRILEECRKSCAQQGVFSNHH.

Residues 1-82 (MASHTKDALL…MLAFQIGRIQ (82 aa)) enclose the Cytochrome b5 heme-binding domain. Residues His-42 and His-65 each coordinate heme. The tract at residues 97-124 (FRHYDENADSEEDDTSGQSQPPSPIFDA) is disordered. The chain crosses the membrane as a helical span at residues 227-247 (LGWYSVSAVFLGCFWHQLVFS). The Histidine box-1 motif lies at 249–253 (HDAGH). Residues 262 to 282 (VDSIIGILIADFLGGLSLGWW) traverse the membrane as a helical segment. The Histidine box-2 signature appears at 286 to 290 (HNVHH). 2 helical membrane-spanning segments follow: residues 382–402 (IAGQ…CSIP) and 408–428 (LSFL…ITLS). The short motif at 470-474 (QAIHH) is the Histidine box-3 element.

The protein belongs to the fatty acid desaturase type 1 family.

The protein resides in the membrane. The catalysed reaction is an N-acylsphing-4-enine + 2 Fe(II)-[cytochrome b5] + O2 + 2 H(+) = a (4E,8E)-4-sphinga-4,8-dienine ceramide + 2 Fe(III)-[cytochrome b5] + 2 H2O. It functions in the pathway lipid metabolism; sphingolipid metabolism. Its function is as follows. Delta(8)-fatty-acid desaturase which introduces a double bond at the 8-position in the long-chain base (LCB) of ceramides. Required for the formation of the di-unsaturated sphingoid base (E,E)-sphinga-4,8-dienine during glucosylceramide (GluCer) biosynthesis. Plays an important role in conidiation. In Emericella nidulans (strain FGSC A4 / ATCC 38163 / CBS 112.46 / NRRL 194 / M139) (Aspergillus nidulans), this protein is Delta 8-(E)-sphingolipid desaturase.